The following is a 700-amino-acid chain: Myb-related protein B (700 aa).

HTH myb-type domains lie at 26–77, 78–133, and 134–184; these read RDSK…LRVL, NPDL…NPEV, and KKSC…KRKV. Residues 54-77 constitute a DNA-binding region (H-T-H motif); sequence WKFLASHFPNRTDQQCQYRWLRVL. Residue lysine 104 forms a Glycyl lysine isopeptide (Lys-Gly) (interchain with G-Cter in SUMO2) linkage. 2 DNA-binding regions (H-T-H motif) span residues 106–129 and 157–180; these read WTLI…HNHL and WAEI…NSTI. Glycyl lysine isopeptide (Lys-Gly) (interchain with G-Cter in SUMO2) cross-links involve residues lysine 194 and lysine 197. Disordered stretches follow at residues 212–287 and 391–412; these read LQSA…PETS and PISP…VLKR. The span at 213-229 shows a compositional bias: polar residues; that stretch reads QSAQPTEGQGSLLTNWP. Serine 241 is subject to Phosphoserine. Threonine 266 is modified (phosphothreonine). Residue lysine 275 forms a Glycyl lysine isopeptide (Lys-Gly) (interchain with G-Cter in SUMO2) linkage. Phosphoserine occurs at positions 282 and 393. A Glycyl lysine isopeptide (Lys-Gly) (interchain with G-Cter in SUMO2) cross-link involves residue lysine 411. The Nuclear localization signal signature appears at 411–417; sequence KRQRKRR. Phosphothreonine; by CDK2 is present on residues threonine 440 and threonine 444. Glycyl lysine isopeptide (Lys-Gly) (interchain with G-Cter in SUMO2) cross-links involve residues lysine 447 and lysine 482. Phosphothreonine; by CDK2 is present on residues threonine 487 and threonine 494. Lysine 499 is covalently cross-linked (Glycyl lysine isopeptide (Lys-Gly) (interchain with G-Cter in SUMO2)). Threonine 505 is subject to Phosphothreonine. A Glycyl lysine isopeptide (Lys-Gly) (interchain with G-Cter in SUMO2) cross-link involves residue lysine 509. Threonine 520 bears the Phosphothreonine; by CDK2 mark. Residues lysine 523, lysine 533, and lysine 546 each participate in a glycyl lysine isopeptide (Lys-Gly) (interchain with G-Cter in SUMO2) cross-link. Residues 564–584 carry the Bipartite nuclear localization signal motif; the sequence is RPEKQKRKPGLRRSPIKKVRK. A Phosphoserine; by CDK2 modification is found at serine 577. Residues lysine 584, lysine 596, lysine 625, lysine 639, and lysine 648 each participate in a glycyl lysine isopeptide (Lys-Gly) (interchain with G-Cter in SUMO2) cross-link.

Component of the DREAM complex (also named LINC complex) at least composed of E2F4, E2F5, LIN9, LIN37, LIN52, LIN54, MYBL1, MYBL2, RBL1, RBL2, RBBP4, TFDP1 and TFDP2. The complex exists in quiescent cells where it represses cell cycle-dependent genes. It dissociates in S phase when LIN9, LIN37, LIN52 and LIN54 form a subcomplex that binds to MYBL22. Interacts with CCNF (via the Cyclin N-terminal domain). In terms of processing, phosphorylated by cyclin A/CDK2 during S-phase. Phosphorylation at Thr-520 is probably involved in transcriptional activity.

The protein localises to the nucleus. Functionally, transcription factor involved in the regulation of cell survival, proliferation, and differentiation. Transactivates the expression of the CLU gene. This chain is Myb-related protein B (MYBL2), found in Homo sapiens (Human).